A 289-amino-acid chain; its full sequence is Diaminopimelate epimerase (289 aa).

2 residues coordinate substrate: Asn-11 and Asn-78. The active-site Proton donor is Cys-87. Residues Gly-88 to Asn-89, Asn-163, Asn-199, and Glu-217 to Arg-218 each bind substrate. Cys-226 acts as the Proton acceptor in catalysis. Gly-227–Thr-228 contributes to the substrate binding site.

Belongs to the diaminopimelate epimerase family. Homodimer.

It is found in the cytoplasm. The catalysed reaction is (2S,6S)-2,6-diaminopimelate = meso-2,6-diaminopimelate. It participates in amino-acid biosynthesis; L-lysine biosynthesis via DAP pathway; DL-2,6-diaminopimelate from LL-2,6-diaminopimelate: step 1/1. In terms of biological role, catalyzes the stereoinversion of LL-2,6-diaminopimelate (L,L-DAP) to meso-diaminopimelate (meso-DAP), a precursor of L-lysine and an essential component of the bacterial peptidoglycan. This Mycolicibacterium vanbaalenii (strain DSM 7251 / JCM 13017 / BCRC 16820 / KCTC 9966 / NRRL B-24157 / PYR-1) (Mycobacterium vanbaalenii) protein is Diaminopimelate epimerase.